The sequence spans 749 residues: Probable serine/threonine-protein kinase fhkD (749 aa).

The region spanning 47-150 (IFFGRNPKRC…NGTFVKGCIL (104 aa)) is the FHA domain. Positions 84–126 (NNNNNDGDNNNNNNNNNNNNNNNNNNNNNNNNNNNNNNNNNNN) are enriched in low complexity. The disordered stretch occupies residues 84-130 (NNNNNDGDNNNNNNNNNNNNNNNNNNNNNNNNNNNNNNNNNNNTTKN). A Protein kinase domain is found at 199–472 (YSIQGILGTG…TKGALSHDWF (274 aa)). Residues 205 to 213 (LGTGNFSVV) and lysine 228 each bind ATP. The active-site Proton acceptor is aspartate 323. Disordered stretches follow at residues 512 to 620 (NIPM…PAII) and 640 to 749 (CTPT…LKGS). Residues 516 to 561 (TLNSTTTNTTSPNNNNNNNNNNNNKNNNKNIIKSLNSNSNNYNNNS) show a composition bias toward low complexity. Residues 562–572 (VLKKTSQSPKT) show a composition bias toward polar residues. Low complexity-rich tracts occupy residues 590–611 (NNNN…NNNN) and 651–667 (TNST…TSNS). The segment covering 668–687 (VTMGTSSTSIPVSNSITMKS) has biased composition (polar residues). Basic and acidic residues predominate over residues 696–707 (DGDKKRKEKESS). Positions 708 to 739 (SSENVNDVIVINSNNHNNNNNNNHNINNGISS) are enriched in low complexity.

The protein belongs to the protein kinase superfamily. CAMK Ser/Thr protein kinase family. CHK2 subfamily.

It carries out the reaction L-seryl-[protein] + ATP = O-phospho-L-seryl-[protein] + ADP + H(+). The catalysed reaction is L-threonyl-[protein] + ATP = O-phospho-L-threonyl-[protein] + ADP + H(+). The sequence is that of Probable serine/threonine-protein kinase fhkD (fhkD) from Dictyostelium discoideum (Social amoeba).